We begin with the raw amino-acid sequence, 191 residues long: Putative endogenous retrovirus group K member 11-1 Env polyprotein (191 aa).

Positions 1 to 191 (MPGAIDDHCP…DITLHPQGLV (191 aa)) are truncated surface protein.

Belongs to the beta type-B retroviral envelope protein family. HERV class-II K(HML-8) env subfamily. Cerebellum and testis.

The protein resides in the virion. Retroviral envelope proteins mediate receptor recognition and membrane fusion during early infection. Endogenous envelope proteins may have kept, lost or modified their original function during evolution. In Homo sapiens (Human), this protein is Putative endogenous retrovirus group K member 11-1 Env polyprotein (ERVK11-1).